We begin with the raw amino-acid sequence, 305 residues long: MENKYTHGVLFYHEHSGLKNINQGIGEVTTALSSICKHLSIQLSENEGDIIKYCQEIKTKNYAKDVDILFILGGDGTVNELINGVMTHDLQLPIGILPGGTFNDFTKTLNIAPNHKQASEQMISAQVGTYDVIKINNQYALNFVGLGLIVQNAENVQDGSKDIFGKLSYIGSTVKTLLNPTQFNYQLSIDDKTYSGETTMILTANGPFIGGSRIPLTDLSPQDGELNTFIFNEQSFSILNDIFKKRDSMNWNEITQGIEHIPGKKISLTTDPAMKVDIDGEISLETPIDIEVIPNAIQLLTVNDL.

Positions 3 to 139 (NKYTHGVLFY…YDVIKINNQY (137 aa)) constitute a DAGKc domain. ATP-binding positions include S44, 74 to 80 (GDGTVNE), and T101. Mg(2+) contacts are provided by S220, D223, and E225. The active-site Proton acceptor is the E281.

The protein belongs to the diacylglycerol/lipid kinase family. Requires Mg(2+) as cofactor.

May catalyze the ATP-dependent phosphorylation of lipids other than diacylglycerol (DAG). In Staphylococcus aureus (strain USA300 / TCH1516), this protein is Putative lipid kinase USA300HOU_0749.